Consider the following 318-residue polypeptide: NAD kinase (318 aa).

The active-site Proton acceptor is the aspartate 84. NAD(+) contacts are provided by residues 84–85 (DG), arginine 89, 159–160 (NE), arginine 170, aspartate 189, and 200–205 (TAYAFS).

This sequence belongs to the NAD kinase family. A divalent metal cation is required as a cofactor.

It is found in the cytoplasm. It carries out the reaction NAD(+) + ATP = ADP + NADP(+) + H(+). In terms of biological role, involved in the regulation of the intracellular balance of NAD and NADP, and is a key enzyme in the biosynthesis of NADP. Catalyzes specifically the phosphorylation on 2'-hydroxyl of the adenosine moiety of NAD to yield NADP. The chain is NAD kinase from Cutibacterium acnes (strain DSM 16379 / KPA171202) (Propionibacterium acnes).